Reading from the N-terminus, the 179-residue chain is Large ribosomal subunit protein uL5 (179 aa).

Belongs to the universal ribosomal protein uL5 family. As to quaternary structure, part of the 50S ribosomal subunit; part of the 5S rRNA/L5/L18/L25 subcomplex. Contacts the 5S rRNA and the P site tRNA. Forms a bridge to the 30S subunit in the 70S ribosome.

Functionally, this is one of the proteins that bind and probably mediate the attachment of the 5S RNA into the large ribosomal subunit, where it forms part of the central protuberance. In the 70S ribosome it contacts protein S13 of the 30S subunit (bridge B1b), connecting the 2 subunits; this bridge is implicated in subunit movement. Contacts the P site tRNA; the 5S rRNA and some of its associated proteins might help stabilize positioning of ribosome-bound tRNAs. The protein is Large ribosomal subunit protein uL5 of Rickettsia rickettsii (strain Iowa).